We begin with the raw amino-acid sequence, 91 residues long: DNA-binding protein HU (91 aa).

This sequence belongs to the bacterial histone-like protein family. Homodimer.

Functionally, histone-like DNA-binding protein which is capable of wrapping DNA to stabilize it, and thus to prevent its denaturation under extreme environmental conditions. This Lactococcus lactis subsp. lactis (strain IL1403) (Streptococcus lactis) protein is DNA-binding protein HU (hup).